The primary structure comprises 177 residues: Nicotinamide-nucleotide adenylyltransferase (177 aa).

It belongs to the archaeal NMN adenylyltransferase family.

The protein localises to the cytoplasm. The enzyme catalyses beta-nicotinamide D-ribonucleotide + ATP + H(+) = diphosphate + NAD(+). Its pathway is cofactor biosynthesis; NAD(+) biosynthesis; NAD(+) from nicotinamide D-ribonucleotide: step 1/1. The polypeptide is Nicotinamide-nucleotide adenylyltransferase (Halobacterium salinarum (strain ATCC 29341 / DSM 671 / R1)).